Consider the following 505-residue polypeptide: Retinoic acid receptor gamma (505 aa).

2 disordered regions span residues Met1–Asp57 and Ser113–Pro134. Basic and acidic residues-rich tracts occupy residues Asp12–Lys22 and Met32–Ala46. The segment at Met52–Pro142 is modulating. Over residues Ser115–Glu124 the composition is skewed to polar residues. 2 consecutive NR C4-type zinc fingers follow at residues Cys143–Cys163 and Cys179–Cys203. The segment at residues Cys143 to Met208 is a DNA-binding region (nuclear receptor). The hinge stretch occupies residues Ser209–Pro237. Residues Glu238–Pro472 form the NR LBD domain. The tract at residues Pro462–Pro505 is disordered. Over residues Ser485 to Pro505 the composition is skewed to basic and acidic residues.

This sequence belongs to the nuclear hormone receptor family. NR1 subfamily. In terms of assembly, heterodimer; with a RXR molecule. Binds DNA preferentially as a RAR/RXR heterodimer. In terms of tissue distribution, isoform Delta-1A and Isoform Delta-1B are most abundant in regenerating limbs, tails, and the anterior half of the lower jaw. Isoform Delta-2 is broadly and uniformly distributed.

It is found in the nucleus. Functionally, receptor for retinoic acid. Retinoic acid receptors bind as heterodimers to their target response elements in response to their ligands, all-trans or 9-cis retinoic acid, and regulate gene expression in various biological processes. The RAR/RXR heterodimers bind to the retinoic acid response elements (RARE) composed of tandem 5'-AGGTCA-3' sites known as DR1-DR5. This chain is Retinoic acid receptor gamma (RARG), found in Notophthalmus viridescens (Eastern newt).